Here is a 563-residue protein sequence, read N- to C-terminus: Serine/threonine-protein kinase WNK8 (563 aa).

A Protein kinase domain is found at 29-286 (IRYDDVLGRG…ALELSKDPFL (258 aa)). ATP is bound by residues 109–112 (TELF) and lysine 159. Residue aspartate 176 is the Proton acceptor of the active site. Residues 426–436 (TSSHHNQNSPR) show a composition bias toward polar residues. The segment at 426–459 (TSSHHNQNSPRLTHEDHEAANQQTVNSKDEEAAG) is disordered. Serine 509 carries the post-translational modification Phosphoserine.

It belongs to the protein kinase superfamily. Ser/Thr protein kinase family. WNK subfamily. Interacts with RGS1 and GB1, but not with GPA1. The association with RGS1 at the plasma membrane is triggered by induction of glucose. Binds to EDM2 in nucleus. Post-translationally, autophosphorylated.

It is found in the nucleus. The enzyme catalyses L-seryl-[protein] + ATP = O-phospho-L-seryl-[protein] + ADP + H(+). It carries out the reaction L-threonyl-[protein] + ATP = O-phospho-L-threonyl-[protein] + ADP + H(+). Functionally, regulates flowering time by modulating the photoperiod pathway. Phosphorylates the vacuolar ATPase subunit C (VATC) and RGS1. Regulates EDM2 that, in turn, modulates development processes. The chain is Serine/threonine-protein kinase WNK8 (WNK8) from Arabidopsis thaliana (Mouse-ear cress).